Consider the following 734-residue polypeptide: Photosystem I P700 chlorophyll a apoprotein A2 (734 aa).

Transmembrane regions (helical) follow at residues 46–69 (IFAS…FHVA), 135–158 (LYTG…LHLQ), 175–199 (LNHH…HVAI), 273–291 (IAHH…GHMY), 330–353 (LHFQ…QHMY), 369–395 (AALY…IFFI), 417–439 (AIIS…LYVH), and 517–535 (FLVH…LILV). [4Fe-4S] cluster is bound by residues Cys-559 and Cys-568. 2 helical membrane-spanning segments follow: residues 575 to 596 (AFYL…YWHW) and 643 to 665 (LSVW…MFLI). 3 residues coordinate chlorophyll a: His-654, Met-662, and Tyr-670. Trp-671 lines the phylloquinone pocket. The helical transmembrane segment at 707 to 727 (LVGLAHFSVGYIFTYAAFLIA) threads the bilayer.

Belongs to the PsaA/PsaB family. As to quaternary structure, the PsaA/B heterodimer binds the P700 chlorophyll special pair and subsequent electron acceptors. PSI consists of a core antenna complex that captures photons, and an electron transfer chain that converts photonic excitation into a charge separation. The eukaryotic PSI reaction center is composed of at least 11 subunits. It depends on P700 is a chlorophyll a/chlorophyll a' dimer, A0 is one or more chlorophyll a, A1 is one or both phylloquinones and FX is a shared 4Fe-4S iron-sulfur center. as a cofactor.

Its subcellular location is the plastid. The protein resides in the chloroplast thylakoid membrane. It carries out the reaction reduced [plastocyanin] + hnu + oxidized [2Fe-2S]-[ferredoxin] = oxidized [plastocyanin] + reduced [2Fe-2S]-[ferredoxin]. Functionally, psaA and PsaB bind P700, the primary electron donor of photosystem I (PSI), as well as the electron acceptors A0, A1 and FX. PSI is a plastocyanin-ferredoxin oxidoreductase, converting photonic excitation into a charge separation, which transfers an electron from the donor P700 chlorophyll pair to the spectroscopically characterized acceptors A0, A1, FX, FA and FB in turn. Oxidized P700 is reduced on the lumenal side of the thylakoid membrane by plastocyanin. This is Photosystem I P700 chlorophyll a apoprotein A2 from Piper cenocladum (Ant piper).